The primary structure comprises 376 residues: Heat-inducible transcription repressor HrcA (376 aa).

This sequence belongs to the HrcA family.

Its function is as follows. Negative regulator of class I heat shock genes (grpE-dnaK-dnaJ and groELS operons). Prevents heat-shock induction of these operons. This chain is Heat-inducible transcription repressor HrcA, found in Chloroflexus aggregans (strain MD-66 / DSM 9485).